Consider the following 283-residue polypeptide: Elongation factor Ts (283 aa).

The involved in Mg(2+) ion dislocation from EF-Tu stretch occupies residues 80 to 83 (TDFV).

Belongs to the EF-Ts family.

It localises to the cytoplasm. Its function is as follows. Associates with the EF-Tu.GDP complex and induces the exchange of GDP to GTP. It remains bound to the aminoacyl-tRNA.EF-Tu.GTP complex up to the GTP hydrolysis stage on the ribosome. In Salmonella agona (strain SL483), this protein is Elongation factor Ts.